The primary structure comprises 636 residues: MEQYKRILLKEFDSRQKVITELTNLEAILNLPKGTELYISDIHGEFAAFDYILRSCAGILNEKIKDCFGDSLSEVHKDRLSALVSYPELVLGEETKGQDWYQETIPQLLNLLAFAGAKYSRSKVRKALPPQYAYIIEELLYSDTALADKKSYFENILTYVIELREAVPFILGLSRSIRQLLIDHLHVVGDIFDRGVGSAQVIDELQHFHSLDIQWGNHDIIWMGAFFGSKACLLNVLRIAARYGYLWDIEKDYGLNLRSLTLFADKTYQSNPKFRPILGGREQEFSEEEILQLEKVHQALSIIQFKLENQLIKRRPEFQMQDHVMLDKIDYWEESITIDDTKHALVNTCFQTINPENPSALTPEENQAVDSMLASFQSSLKMAEHMSLLMNKGSMYKIYNKHLLFHGCIPLEPSGEFQPFILNQAHYAGKELLDFFEYHIRQAAKDKEVGDDLSTDLIWYCWKGKLSPLFGKEKMTTLERYFIEDKETHKEVENSYFSYRNSEKVCQLILEEFGLFSQESRMVNGHTPVKTGKGESPIRGGGLLFVIDGGLCKAYQKKTGTAGYSLLNNSYGFQLVTHQPFQNAQKVVESPFAQTSLKKVIENVEERTLIKSTTIGQSLLAQQQELFGLLHEFYDR.

It belongs to the FBPase class 3 family. The cofactor is Mn(2+).

It catalyses the reaction beta-D-fructose 1,6-bisphosphate + H2O = beta-D-fructose 6-phosphate + phosphate. It functions in the pathway carbohydrate biosynthesis; gluconeogenesis. This Streptococcus sanguinis (strain SK36) protein is Fructose-1,6-bisphosphatase class 3.